We begin with the raw amino-acid sequence, 408 residues long: Neutral cholesterol ester hydrolase 1 (408 aa).

Residues 1 to 4 lie on the Cytoplasmic side of the membrane; it reads MRSS. The helical; Signal-anchor for type II membrane protein transmembrane segment at 5–25 threads the bilayer; the sequence is CVLLTALLALAAYYIYIPLPS. At 26–408 the chain is on the lumenal side; sequence SVSDPWKLML…SYIKWLDQNL (383 aa). The Involved in the stabilization of the negatively charged intermediate by the formation of the oxyanion hole signature appears at 113 to 115; it reads HGG. The active site involves Ser191. N-linked (GlcNAc...) asparagine glycosylation is found at Asn270 and Asn287. Active-site residues include Asp348 and His378. Asn389 carries N-linked (GlcNAc...) asparagine glycosylation.

Belongs to the 'GDXG' lipolytic enzyme family. Post-translationally, N-glycosylated.

It is found in the cell membrane. It localises to the microsome. It carries out the reaction a 1-O-alkyl-2-acetyl-sn-glycerol + H2O = a 1-O-alkyl-sn-glycerol + acetate + H(+). It catalyses the reaction 1-O-hexadecyl-2-acetyl-sn-glycerol + H2O = 1-O-hexadecyl-sn-glycerol + acetate + H(+). The enzyme catalyses a cholesterol ester + H2O = cholesterol + a fatty acid + H(+). The catalysed reaction is cholesteryl (9Z-octadecenoate) + H2O = cholesterol + (9Z)-octadecenoate + H(+). Functionally, hydrolyzes 2-acetyl monoalkylglycerol ether (1-O-alkyl-2-acetyl-sn-glycerol), the penultimate precursor of the pathway for de novo synthesis of platelet-activating factor. May be responsible for the hydrolysis of cholesterol esters (such as cholesteryl (9Z-octadecenoate)) in macrophages. Also involved in organ detoxification by hydrolyzing exogenous organophosphorus compounds. The chain is Neutral cholesterol ester hydrolase 1 (NCEH1) from Bos taurus (Bovine).